The primary structure comprises 496 residues: T-cell activation inhibitor, mitochondrial (496 aa).

Residues lysine 404–lysine 437 are a coiled coil.

The protein resides in the mitochondrion. May regulate T-cell apoptosis. The sequence is that of T-cell activation inhibitor, mitochondrial (TCAIM) from Homo sapiens (Human).